Reading from the N-terminus, the 83-residue chain is Defensin-like protein 47 (83 aa).

The N-terminal stretch at 1–27 (MGSTKTLVTCFLVIILAVSLPNNNVLA) is a signal peptide. 4 cysteine pairs are disulfide-bonded: cysteine 40–cysteine 81, cysteine 44–cysteine 68, cysteine 53–cysteine 79, and cysteine 57–cysteine 80.

This sequence belongs to the DEFL family.

The protein localises to the secreted. This is Defensin-like protein 47 from Arabidopsis thaliana (Mouse-ear cress).